Consider the following 1056-residue polypeptide: Kinesin-like protein KIN-5A (1056 aa).

The disordered stretch occupies residues 1–44; the sequence is MDRRIGLTSPSPKSTEKSGRDLRSGGDANGGANTNSNSIPRGDK. The span at 14-24 shows a compositional bias: basic and acidic residues; that stretch reads STEKSGRDLRS. The 347-residue stretch at 49–395 folds into the Kinesin motor domain; the sequence is NVQVILRCRP…LDYAHRAKNI (347 aa). Residue 135–142 coordinates ATP; the sequence is GQTGTGKT. A coiled-coil region spans residues 443 to 525; that stretch reads QEEAEKKAMT…STIKEKEYVI (83 aa).

This sequence belongs to the TRAFAC class myosin-kinesin ATPase superfamily. Kinesin family. KIN-5/BimC subfamily.

Its subcellular location is the cytoplasm. The protein localises to the cytoskeleton. It localises to the spindle. Its function is as follows. Responsible for microtubule translocation. May be important for the organization of phragmoplast-specific arrays of microtubules. Plays an essential role in stabilizing the mitotic spindle. Required during mitotic cytokinesis. This chain is Kinesin-like protein KIN-5A, found in Oryza sativa subsp. japonica (Rice).